Consider the following 153-residue polypeptide: MRCPYCGYEDSKVIDTRPADEGRTIKRRRECLKCQKRFTTFEKVERQPILVIKKDNRREEFDRSKILNGIIKACQKRPVSIEQMNKIVDEIENEIYNSMRDEISSREIGEMVMEKLKKLDEISYVRFASVYRQFKDINTFIEELQKLLTEKIE.

A zinc finger lies at 3-34; that stretch reads CPYCGYEDSKVIDTRPADEGRTIKRRRECLKC. In terms of domain architecture, ATP-cone spans 49–139; that stretch reads ILVIKKDNRR…VYRQFKDINT (91 aa).

Belongs to the NrdR family. The cofactor is Zn(2+).

Its function is as follows. Negatively regulates transcription of bacterial ribonucleotide reductase nrd genes and operons by binding to NrdR-boxes. The protein is Transcriptional repressor NrdR of Caldicellulosiruptor saccharolyticus (strain ATCC 43494 / DSM 8903 / Tp8T 6331).